A 1369-amino-acid polypeptide reads, in one-letter code: Xanthine dehydrogenase (1369 aa).

The 87-residue stretch at 20 to 106 (GEAVVYVNGV…GMHIITVEGI (87 aa)) folds into the 2Fe-2S ferredoxin-type domain. The [2Fe-2S] cluster site is built by C58, C63, C66, C88, C128, C131, C164, and C166. In terms of domain architecture, FAD-binding PCMH-type spans 265 to 450 (NGFNGIRWYR…LSVILPWTRP (186 aa)). FAD contacts are provided by residues 293 to 300 (LIIGNSEV), F373, 383 to 387 (SVGGN), D396, L440, and K458. Residues Q804 and F835 each contribute to the Mo-molybdopterin site. Substrate is bound by residues E839 and R917. Residue R949 coordinates Mo-molybdopterin. Residues F951 and T1047 each contribute to the substrate site. Residue A1116 participates in Mo-molybdopterin binding. The Proton acceptor role is filled by E1305.

Belongs to the xanthine dehydrogenase family. As to quaternary structure, homodimer. Requires [2Fe-2S] cluster as cofactor. FAD serves as cofactor. Mo-molybdopterin is required as a cofactor.

It carries out the reaction xanthine + NAD(+) + H2O = urate + NADH + H(+). The catalysed reaction is hypoxanthine + NAD(+) + H2O = xanthine + NADH + H(+). Its function is as follows. Key enzyme involved in purine catabolism. Catalyzes the oxidation of hypoxanthine to xanthine and the oxidation of xanthine to urate. This chain is Xanthine dehydrogenase (XDH), found in Oryza sativa subsp. japonica (Rice).